Reading from the N-terminus, the 259-residue chain is UPF0246 protein SG0407 (259 aa).

It belongs to the UPF0246 family.

In Sodalis glossinidius (strain morsitans), this protein is UPF0246 protein SG0407.